A 565-amino-acid chain; its full sequence is Heme/hemopexin transporter protein HuxB (565 aa).

An N-terminal signal peptide occupies residues 1–26 (MKMRPRYSVIASAVSLGFVLSKSVMA). Positions 73-150 (FPLTQVQILD…GTVKILLLKG (78 aa)) constitute a POTRA domain.

Belongs to the TPS (TC 1.B.20) family.

The protein localises to the cell outer membrane. Likely functions in the release of soluble HxuA from the cell. In terms of biological role, probable member of a two partner secretion pathway (TPS) in which it mediates the secretion of HuxA. The chain is Heme/hemopexin transporter protein HuxB (hxuB) from Haemophilus influenzae.